The sequence spans 239 residues: Large ribosomal subunit protein uL2 (239 aa).

The interval histidine 202–glycine 239 is disordered. Residues lysine 225 to glycine 239 are compositionally biased toward basic residues.

The protein belongs to the universal ribosomal protein uL2 family. Part of the 50S ribosomal subunit. Forms a bridge to the 30S subunit in the 70S ribosome.

Functionally, one of the primary rRNA binding proteins. Required for association of the 30S and 50S subunits to form the 70S ribosome, for tRNA binding and peptide bond formation. It has been suggested to have peptidyltransferase activity; this is somewhat controversial. Makes several contacts with the 16S rRNA in the 70S ribosome. In Desulfurococcus amylolyticus (strain DSM 18924 / JCM 16383 / VKM B-2413 / 1221n) (Desulfurococcus kamchatkensis), this protein is Large ribosomal subunit protein uL2.